Consider the following 191-residue polypeptide: Phosphoheptose isomerase (191 aa).

An SIS domain is found at 37-191 (IADSFKQDGK…IIQLIEKEME (155 aa)). 52 to 54 (NGG) is a substrate binding site. 2 residues coordinate Zn(2+): His-61 and Glu-65. Substrate is bound by residues Glu-65, 93–94 (ND), 119–121 (STS), Ser-124, and Gln-172. The Zn(2+) site is built by Gln-172 and His-180.

Belongs to the SIS family. GmhA subfamily. Homotetramer. Zn(2+) serves as cofactor.

Its subcellular location is the cytoplasm. It carries out the reaction 2 D-sedoheptulose 7-phosphate = D-glycero-alpha-D-manno-heptose 7-phosphate + D-glycero-beta-D-manno-heptose 7-phosphate. The protein operates within carbohydrate biosynthesis; D-glycero-D-manno-heptose 7-phosphate biosynthesis; D-glycero-alpha-D-manno-heptose 7-phosphate and D-glycero-beta-D-manno-heptose 7-phosphate from sedoheptulose 7-phosphate: step 1/1. It functions in the pathway bacterial outer membrane biogenesis; LPS core biosynthesis. In terms of biological role, catalyzes the isomerization of sedoheptulose 7-phosphate in D-glycero-D-manno-heptose 7-phosphate. This is Phosphoheptose isomerase from Vibrio parahaemolyticus serotype O3:K6 (strain RIMD 2210633).